We begin with the raw amino-acid sequence, 1273 residues long: Homeobox protein cut-like ceh-44 (1273 aa).

Coiled coils occupy residues 101 to 407 and 440 to 468; these read LLKG…DGFK and RQKNTDSELIEKIQEAKRNKAVCELKFED. DNA-binding regions (CUT) lie at residues 591–681, 832–919, and 978–1065; these read NVQA…LSPR, QAQY…KQPK, and IDES…KEES. The tract at residues 1069–1100 is disordered; it reads VKAKIESVPAPREAPRPVKRKHSSDTDDYDLN. The homeobox DNA-binding region spans 1103 to 1162; that stretch reads KPIQRTVITDYQKDTLRFVFVNEQHPSNELCEQISLKLDMSLRTVQNWFHNHRTRSKARE.

The protein belongs to the CUT homeobox family.

The protein localises to the nucleus. Functionally, probable DNA-binding regulatory protein involved in cell-fate specification. The chain is Homeobox protein cut-like ceh-44 from Caenorhabditis elegans.